Reading from the N-terminus, the 479-residue chain is MKALNKETAAKTQRPERIIQFGEGNFLRAFVDWIIYNMNEKTDFNSSVVVVQPIEKGMVDMLNAQDCLYHVNLQGLDKGQVVNSLTKIDVISRALNPYSQNDEFMKLAEQPEMRFVISNTTEAGIAFDPACKLDDAPASSYPGKLTQLLYHRYKTFNGDKSKGLIIFPCELIFLNGHKLKETIYQYIDLWNLGEDFKQWFEEACGVYATLVDRIVPGFPRKDIAAIKEKLQYDDNLVVQAEIFHLWVIEAPQEVAKEFPADKAGLNVLFVPSEAPYHERKVTLLNGPHTVLSPVAYLSGINIVREACEHEVVGKYIHKVMFDELMETLNLPKEELKKFAEDVLERFNNPFVDHQVTSIMLNSFPKYETRDLPGLKVYLERKGELPKGLVLGLAAIITYYKGGVRADGAEIVPNDAPEIMNLLKELWATGCTQKVAEGVLAAESIWGENLNNIPGLTAAVKADLDSIQEKGMLETVKGIL.

Isoleucine 18 to alanine 29 serves as a coordination point for NAD(+).

It belongs to the mannitol dehydrogenase family. UxaB subfamily.

It catalyses the reaction D-altronate + NAD(+) = keto-D-tagaturonate + NADH + H(+). Its pathway is carbohydrate metabolism; pentose and glucuronate interconversion. This Phocaeicola vulgatus (strain ATCC 8482 / DSM 1447 / JCM 5826 / CCUG 4940 / NBRC 14291 / NCTC 11154) (Bacteroides vulgatus) protein is Altronate oxidoreductase.